We begin with the raw amino-acid sequence, 261 residues long: DNA repair protein RecO (261 aa).

The protein belongs to the RecO family.

Involved in DNA repair and RecF pathway recombination. This Gloeobacter violaceus (strain ATCC 29082 / PCC 7421) protein is DNA repair protein RecO.